A 2176-amino-acid chain; its full sequence is Methyl-CpG-binding domain-containing protein 9 (2176 aa).

Residues 1–13 (MEPTDSTNEQLGD) are compositionally biased toward polar residues. 2 disordered regions span residues 1 to 20 (MEPT…AAVK) and 28 to 85 (GIDL…RDAS). Residues 83-133 (DASCGACGRPESIELVVVCDACERGFHMSCVNDGVEAAPSADWMCSDCRTG) form a PHD-type 1 zinc finger. Residues 86-131 (CGACGRPESIELVVVCDACERGFHMSCVNDGVEAAPSADWMCSDCR) form an RING-type 1; degenerate zinc finger. An MBD domain is found at 258 to 327 (RHFISERHGV…MDAEIRNENS (70 aa)). Residues 403 to 456 (GCPMQFEDFFVLSLGRIDIRQSYHNVNVIYPIGYKSCWHDKITGSLFTCEVSDG) form the FYR N-terminal domain. Residues 491-511 (EQNSDKLSNRRDSTQERDDDA) are a coiled coil. Positions 550-698 (SSRVDFDKNL…ESCTNYRTLK (149 aa)) constitute an FYR C-terminal domain. Short sequence motifs (nuclear localization signal) lie at residues 914–921 (SRRGRKKD), 1124–1131 (KKRTYISV), and 1256–1263 (YRKLECLS). One copy of the Pumilio repeat lies at 1098–1137 (PTKKAVLSLLADIRGGDLVQRSIKGTKKRTYISVSDVIMK). A Bromo domain is found at 1130–1245 (SVSDVIMKKC…EKFKSLYEAE (116 aa)). A coiled-coil region spans residues 1251 to 1273 (QKLKDYRKLECLSAEMKKEIKDI). Residues 1287-1337 (EGVCKVCGVDKDDDSVLLCDTCDAEYHTYCLNPPLIRIPDGNWYCPSCVIA) form a PHD-type 2 zinc finger. Residues 1290 to 1335 (CKVCGVDKDDDSVLLCDTCDAEYHTYCLNPPLIRIPDGNWYCPSCV) form an RING-type 2; degenerate zinc finger. The short motif at 1337 to 1344 (AKRMAQEA) is the Nuclear localization signal element. Residues 1410–1437 (QHLEQCAEAIIEMQQKLRSLSSEWKNAK) are a coiled coil. Disordered stretches follow at residues 1472–1553 (GCDP…NLPE) and 1565–1595 (GRNH…QELQ). Composition is skewed to polar residues over residues 1492–1513 (SSTA…TQPG), 1523–1532 (KISSPETISS), and 1585–1595 (DASSQASQELQ). The stretch at 1588–1628 (SQASQELQACQQDLSATSNEIQNLQQSIRSIESQLLKQSIR) forms a coiled coil. Positions 1761 to 1768 (EKRYGPCI) match the Nuclear localization signal motif. Residues 2136–2176 (IDETKPIISLPDQKSQPVSDSQERSSRVRRSGKKRKEPEGS) form a disordered region.

Interacts with histone H4. As to expression, expressed in leaves, buds, flowers and stems.

The protein resides in the nucleus. The enzyme catalyses L-lysyl-[protein] + acetyl-CoA = N(6)-acetyl-L-lysyl-[protein] + CoA + H(+). Functionally, probable transcriptional regulator that acts as a histone acetyltransferase. Mediates the acetylation of histone H3 and H4 of target loci (e.g. FLC). Involved in an auxin-independent regulation of shoot branching and flowering time. This chain is Methyl-CpG-binding domain-containing protein 9 (MBD9), found in Arabidopsis thaliana (Mouse-ear cress).